The sequence spans 554 residues: MNTNSRRITHGFTRSPNRAMLCAMGYDGADFAKPIIGVGSGYSTITPCNAGIQRVVDAAKAMLARHGAMTQVFGIPTISDGISMGTPGMRYSLVSREVIADCIEACACGQSMDGLLVVGGCDKNLPGGMIGLLRANIPGIYLYGGTILPGYWGARELTVVSSFEAVGAMGRQGMSIDAMREVERHACPTTGSCGGMYTANTMSASFEALGMSLLYSSTAPSPGIEGELSISTSARSLINAVRRGIRPRDVVTHRSIRNAMAVVMAVGGSTNAVLHYLAIAAAARSALSLHDVELIRRRVPVICNMKPSGLHSTADLHSAGGVPRVMHELALAGLIDESCLTITGRTIGAELLAAHRKRHGSTVVLPTNMALYRTGRLVVLSGNMSRNGAVAKTSGLSILLHSGTARVFRSEEACVQAILNGCVRIGDVVVLIYLGPKGGPGMPEMLSPTAALVGMGLGQSACLITDGRFSGGTWGLVVGHVSPEAAVGGSIALVRNGDFITVDLRNNSLHLHIDAWSLAARRAAWRLPCTLCVEGLLRKYHDGVGQSHNGAIAA.

A [2Fe-2S] cluster-binding site is contributed by C48. Residue D80 participates in Mg(2+) binding. C121 lines the [2Fe-2S] cluster pocket. Mg(2+) contacts are provided by D122 and K123. Residue K123 is modified to N6-carboxylysine. C193 contacts [2Fe-2S] cluster. E444 provides a ligand contact to Mg(2+). S470 acts as the Proton acceptor in catalysis.

The protein belongs to the IlvD/Edd family. Homodimer. [2Fe-2S] cluster serves as cofactor. Mg(2+) is required as a cofactor.

The enzyme catalyses (2R)-2,3-dihydroxy-3-methylbutanoate = 3-methyl-2-oxobutanoate + H2O. It carries out the reaction (2R,3R)-2,3-dihydroxy-3-methylpentanoate = (S)-3-methyl-2-oxopentanoate + H2O. It functions in the pathway amino-acid biosynthesis; L-isoleucine biosynthesis; L-isoleucine from 2-oxobutanoate: step 3/4. Its pathway is amino-acid biosynthesis; L-valine biosynthesis; L-valine from pyruvate: step 3/4. Its function is as follows. Functions in the biosynthesis of branched-chain amino acids. Catalyzes the dehydration of (2R,3R)-2,3-dihydroxy-3-methylpentanoate (2,3-dihydroxy-3-methylvalerate) into 2-oxo-3-methylpentanoate (2-oxo-3-methylvalerate) and of (2R)-2,3-dihydroxy-3-methylbutanoate (2,3-dihydroxyisovalerate) into 2-oxo-3-methylbutanoate (2-oxoisovalerate), the penultimate precursor to L-isoleucine and L-valine, respectively. The protein is Dihydroxy-acid dehydratase of Tremblaya princeps.